Consider the following 196-residue polypeptide: Putative NADH dehydrogenase/NAD(P)H nitroreductase PXO_03909 (196 aa).

Belongs to the nitroreductase family. HadB/RutE subfamily. The cofactor is FMN.

In Xanthomonas oryzae pv. oryzae (strain PXO99A), this protein is Putative NADH dehydrogenase/NAD(P)H nitroreductase PXO_03909.